A 512-amino-acid chain; its full sequence is Extracellular serine/threonine protein kinase CeFam20 (512 aa).

The Cytoplasmic segment spans residues methionine 1–lysine 6. A helical; Signal-anchor for type II membrane protein membrane pass occupies residues arginine 7 to serine 26. Residues lysine 27–valine 512 are Lumenal-facing. A disulfide bridge connects residues cysteine 110 and cysteine 144. An N-linked (GlcNAc...) asparagine glycan is attached at asparagine 113. The ATP site is built by glutamine 176, lysine 192, and glutamate 213. Glutamate 213 is a Mn(2+) binding site. A glycan (N-linked (GlcNAc...) asparagine) is linked at asparagine 242. 2 cysteine pairs are disulfide-bonded: cysteine 268–cysteine 284 and cysteine 273–cysteine 277. ATP is bound at residue glutamine 295–leucine 298. 2 disulfides stabilise this stretch: cysteine 333–cysteine 409 and cysteine 410–cysteine 469. The active site involves aspartate 366. Glutamate 371 and aspartate 387 together coordinate ATP. Aspartate 387 contributes to the Mn(2+) binding site. A disordered region spans residues proline 486 to valine 512. Residues serine 489–serine 499 are compositionally biased toward acidic residues. The segment covering glutamate 500–valine 512 has biased composition (basic and acidic residues).

This sequence belongs to the FAM20 family. It depends on Mn(2+) as a cofactor.

It is found in the golgi apparatus membrane. Its subcellular location is the secreted. It catalyses the reaction L-seryl-[protein] + ATP = O-phospho-L-seryl-[protein] + ADP + H(+). The enzyme catalyses L-threonyl-[protein] + ATP = O-phospho-L-threonyl-[protein] + ADP + H(+). Golgi serine/threonine protein kinase that phosphorylates secretory pathway proteins within Ser-x-Glu/pSer motifs. In Caenorhabditis elegans, this protein is Extracellular serine/threonine protein kinase CeFam20.